A 363-amino-acid polypeptide reads, in one-letter code: Flagellar P-ring protein (363 aa).

Positions 1-20 (MKYRLIVALAMLVLSLPSQA) are cleaved as a signal peptide.

It belongs to the FlgI family. In terms of assembly, the basal body constitutes a major portion of the flagellar organelle and consists of four rings (L,P,S, and M) mounted on a central rod.

Its subcellular location is the periplasm. It localises to the bacterial flagellum basal body. Its function is as follows. Assembles around the rod to form the L-ring and probably protects the motor/basal body from shearing forces during rotation. This is Flagellar P-ring protein from Shewanella sp. (strain ANA-3).